Consider the following 305-residue polypeptide: Homoserine kinase (305 aa).

95 to 105 (PHGRGLGSSSA) is a binding site for ATP.

It belongs to the GHMP kinase family. Homoserine kinase subfamily.

The protein resides in the cytoplasm. It catalyses the reaction L-homoserine + ATP = O-phospho-L-homoserine + ADP + H(+). Its pathway is amino-acid biosynthesis; L-threonine biosynthesis; L-threonine from L-aspartate: step 4/5. Functionally, catalyzes the ATP-dependent phosphorylation of L-homoserine to L-homoserine phosphate. The polypeptide is Homoserine kinase (Streptomyces avermitilis (strain ATCC 31267 / DSM 46492 / JCM 5070 / NBRC 14893 / NCIMB 12804 / NRRL 8165 / MA-4680)).